A 406-amino-acid chain; its full sequence is Membrane protein UL43 homolog (406 aa).

10 helical membrane passes run 48-68 (LFLV…QYHV), 71-91 (AAVN…PTSV), 103-123 (CLQT…CPIS), 126-146 (LPFV…VAAV), 162-182 (IYFY…VILY), 188-208 (YEVL…VDAA), 266-286 (SVIP…SHII), 299-319 (LAVS…AVLY), 339-359 (IAVT…STVA), and 386-406 (VYHV…TYVS).

Belongs to the alphaherpesvirinae HHV-1 UL43 family.

It is found in the membrane. The sequence is that of Membrane protein UL43 homolog from Varicella-zoster virus (strain Dumas) (HHV-3).